We begin with the raw amino-acid sequence, 559 residues long: Glucans biosynthesis protein G (559 aa).

Residues 1–37 (MVSLLSCGTSASSHIVKKALTRLSLAMAAGLCFNLAA) form the signal peptide.

It belongs to the OpgD/OpgG family.

The protein localises to the periplasm. The protein operates within glycan metabolism; osmoregulated periplasmic glucan (OPG) biosynthesis. Functionally, involved in the biosynthesis of osmoregulated periplasmic glucans (OPGs). This is Glucans biosynthesis protein G from Shewanella frigidimarina (strain NCIMB 400).